Reading from the N-terminus, the 123-residue chain is Large ribosomal subunit protein uL29 (123 aa).

The protein belongs to the universal ribosomal protein uL29 family.

This Theileria parva (East coast fever infection agent) protein is Large ribosomal subunit protein uL29 (RPL35).